A 326-amino-acid chain; its full sequence is Phosphotriesterase homology protein (326 aa).

Zn(2+) contacts are provided by His22, His24, Lys145, His178, His207, and Asp264. Lys145 is modified (N6-carboxylysine).

The protein belongs to the metallo-dependent hydrolases superfamily. Phosphotriesterase family. It depends on Zn(2+) as a cofactor.

The polypeptide is Phosphotriesterase homology protein (php) (Mycobacterium tuberculosis (strain CDC 1551 / Oshkosh)).